We begin with the raw amino-acid sequence, 419 residues long: Transcription regulator lscL (419 aa).

The zn(2)-C6 fungal-type DNA-binding region spans 12–35 (RIRKVKCDEKKPCCQKCIDTGRTC).

It is found in the nucleus. Its function is as follows. Transcription factor that may coregulate the expression of the gene cluster that mediates the biosynthesis of the lipopeptide antibiotics leucinostatins that show extensive biological activities, including antimalarial, antiviral, antibacterial, antifungal, and antitumor activities, as well as phytotoxic. This is Transcription regulator lscL from Purpureocillium lilacinum (Paecilomyces lilacinus).